The primary structure comprises 604 residues: Elongation factor 4 (604 aa).

The tr-type G domain maps to 7–189; sequence SRIRNFSIIA…SIVHLVPPPD (183 aa). Residues 19–24 and 136–139 contribute to the GTP site; these read DHGKST and NKID.

It belongs to the TRAFAC class translation factor GTPase superfamily. Classic translation factor GTPase family. LepA subfamily.

It is found in the cell inner membrane. It carries out the reaction GTP + H2O = GDP + phosphate + H(+). Required for accurate and efficient protein synthesis under certain stress conditions. May act as a fidelity factor of the translation reaction, by catalyzing a one-codon backward translocation of tRNAs on improperly translocated ribosomes. Back-translocation proceeds from a post-translocation (POST) complex to a pre-translocation (PRE) complex, thus giving elongation factor G a second chance to translocate the tRNAs correctly. Binds to ribosomes in a GTP-dependent manner. In Gloeothece citriformis (strain PCC 7424) (Cyanothece sp. (strain PCC 7424)), this protein is Elongation factor 4.